The primary structure comprises 194 residues: Phosphoheptose isomerase (194 aa).

Residues 37-194 (IADTFKAGGK…LIEKEMVAQG (158 aa)) form the SIS domain. Residue 52-54 (NGG) coordinates substrate. His-61 and Glu-65 together coordinate Zn(2+). Substrate contacts are provided by residues Glu-65, 93-94 (ND), 119-121 (STS), Ser-124, and Gln-172. Residues Gln-172 and His-180 each contribute to the Zn(2+) site.

Belongs to the SIS family. GmhA subfamily. As to quaternary structure, homotetramer. Zn(2+) serves as cofactor.

It localises to the cytoplasm. The enzyme catalyses 2 D-sedoheptulose 7-phosphate = D-glycero-alpha-D-manno-heptose 7-phosphate + D-glycero-beta-D-manno-heptose 7-phosphate. It functions in the pathway carbohydrate biosynthesis; D-glycero-D-manno-heptose 7-phosphate biosynthesis; D-glycero-alpha-D-manno-heptose 7-phosphate and D-glycero-beta-D-manno-heptose 7-phosphate from sedoheptulose 7-phosphate: step 1/1. Functionally, catalyzes the isomerization of sedoheptulose 7-phosphate in D-glycero-D-manno-heptose 7-phosphate. In Sodalis glossinidius (strain morsitans), this protein is Phosphoheptose isomerase.